A 404-amino-acid polypeptide reads, in one-letter code: Type I restriction enzyme EcoR124I/EcoR124II specificity subunit (404 aa).

Residues Met-1–Lys-153 form a target-recognition domain 1 region. The conserved region 1 stretch occupies residues Ser-154 to Gly-199. A target-recognition domain 2 region spans residues Glu-200–Pro-349. Residues Asn-350–Asn-404 form a conserved region 2 region.

It belongs to the type-I restriction system S methylase family. The type I restriction/modification system is composed of three polypeptides R, M and S; the restriction enzyme has stoichiometry R(2)M(2)S(1) while the methyltransferase is M(2)S(1). There is an equilibrium between R(2)M(2)S(1) and R(1)M(2)S(1); the latter is methylation and translocation proficient but restriction deficient. As to quaternary structure, (Microbial infection) Holoenenzyme interacts with Escherichia phage T7 protein Ocr; this interaction leads to the inhibition of the restriction activity, but may still allow methylation and translocation.

Its function is as follows. The specificity (S) subunit of a type I restriction enzyme; this subunit dictates DNA sequence specificity. The presence or absence of a 4-residue repeat changes the sequence specificity; a third copy of TAEL inserted at position 179-180 changes the recognition site from 5'-GAAN(6)RTCG-3' (for EcoR124I) to 5'-GAAN(7)RTCG-3' (for EcoR124II). The M and S subunits together form a methyltransferase (MTase) that methylates A-3 on the top and bottom strand of the sequence 5'-GAAN(7)RTCG-3'. In the presence of the R subunit the complex can also act as an endonuclease, binding to the same target sequence but cutting the DNA some distance from this site. Whether the DNA is cut or modified depends on the methylation state of the target sequence. When the target site is unmodified, the DNA is cut. When the target site is hemimethylated, the complex acts as a maintenance MTase modifying the DNA so that both strands become methylated. After locating a non-methylated recognition site, the enzyme complex serves as a molecular motor that translocates DNA in an ATP-dependent manner until a collision occurs that triggers cleavage. The R(1)M(2)S(1) complex translocates an average of 555 bp/second on nicked DNA; the R(2)M(2)S(1) complex translocates at double that speed. The 2 R subunit motors are independent and track along the helical pitch of the DNA, inducing positive supercoiling ahead of themselves. The polypeptide is Type I restriction enzyme EcoR124I/EcoR124II specificity subunit (hsdS) (Escherichia coli).